The primary structure comprises 427 residues: Gamma-glutamyl phosphate reductase (427 aa).

Belongs to the gamma-glutamyl phosphate reductase family.

Its subcellular location is the cytoplasm. The catalysed reaction is L-glutamate 5-semialdehyde + phosphate + NADP(+) = L-glutamyl 5-phosphate + NADPH + H(+). Its pathway is amino-acid biosynthesis; L-proline biosynthesis; L-glutamate 5-semialdehyde from L-glutamate: step 2/2. Catalyzes the NADPH-dependent reduction of L-glutamate 5-phosphate into L-glutamate 5-semialdehyde and phosphate. The product spontaneously undergoes cyclization to form 1-pyrroline-5-carboxylate. The chain is Gamma-glutamyl phosphate reductase from Anaeromyxobacter sp. (strain K).